We begin with the raw amino-acid sequence, 121 residues long: Large ribosomal subunit protein bL20 (121 aa).

Belongs to the bacterial ribosomal protein bL20 family.

Binds directly to 23S ribosomal RNA and is necessary for the in vitro assembly process of the 50S ribosomal subunit. It is not involved in the protein synthesizing functions of that subunit. The sequence is that of Large ribosomal subunit protein bL20 from Ruegeria sp. (strain TM1040) (Silicibacter sp.).